We begin with the raw amino-acid sequence, 687 residues long: Dentin sialophosphoprotein (687 aa).

The N-terminal stretch at 1–17 (MKTKIIIYICIWATAWA) is a signal peptide. The tract at residues 54–113 (NNATNDDSPKGSELGRQVHSNGGYERDRNGSESIAVGGKSSPTQPILANAQGNSAKERED) is disordered. N-linked (GlcNAc...) asparagine glycosylation occurs at N55. T57 bears the Phosphothreonine; by CK2 mark. A glycan (N-linked (GlcNAc...) asparagine) is linked at N82. Over residues 93-107 (SSPTQPILANAQGNS) the composition is skewed to polar residues. The N-linked (GlcNAc...) asparagine glycan is linked to N128. A compositionally biased stretch (basic and acidic residues) spans 146–160 (EAKESKVHGQPHQDT). The interval 146-687 (EAKESKVHGQ…SDSNHSTSDD (542 aa)) is disordered. The span at 161-194 (KTGLASDTSQNGDATLVQENEPQVAGSKNSTNHE) shows a compositional bias: polar residues. N189 carries an N-linked (GlcNAc...) asparagine glycan. S226 bears the Phosphoserine; by CK2 mark. A Phosphoserine; by CK1 modification is found at S253. The span at 262 to 275 (GDGRESHDGTEGHE) shows a compositional bias: basic and acidic residues. Residues 276–292 (GQSSGGNNDNRGQGSVS) show a composition bias toward polar residues. Phosphoserine; by CK1 is present on S278. The residue at position 292 (S292) is a Phosphoserine; by CK2. Residue S298 is modified to Phosphoserine; by CK1. N-linked (GlcNAc...) asparagine glycosylation is present at N312. S315 is modified (phosphoserine; by CK2). Phosphothreonine; by CK2 occurs at positions 319 and 329. A phosphoserine; by CK2 mark is found at S337 and S345. Over residues 352 to 375 (SGQSQNQGLETEGSSTGNKSSITK) the composition is skewed to polar residues. A Phosphoserine; by CK1 modification is found at S366. A glycan (N-linked (GlcNAc...) asparagine) is linked at N369. The segment covering 386 to 417 (SNGHHGMELDKRNSPKQGESDKPQGAAEKSDT) has biased composition (basic and acidic residues). Positions 418–432 (HNNMGHSRIGSSSNS) are enriched in polar residues. Low complexity predominate over residues 447-460 (GDDPNSSDESNGSD). Acidic residues predominate over residues 500–521 (DDSSDDTSDTDDSDSNGDDDSE). Basic and acidic residues predominate over residues 522–545 (SKDKDESDNSNHDNDSDSESKSDS). Positions 555–598 (SSDSSDSSDSSETSDSSDSSDTSDSSDSSDSSDSSNSSDTSDSS) are enriched in low complexity. The segment covering 599 to 617 (DSSDGDSSDGDSSDSDSSD) has biased composition (acidic residues). Residues 618–639 (SDSSNSSDSDSSDSSDSSSSDS) show a composition bias toward low complexity. The segment covering 667-677 (SDSDSDSDSEG) has biased composition (acidic residues). Residues 678-687 (SDSNHSTSDD) show a composition bias toward low complexity.

Interacts with FBLN7. DSP is glycosylated. As to expression, specifically expressed in teeth, mainly in odontoblasts and transiently in pre-ameloblasts.

The protein localises to the secreted. Its subcellular location is the extracellular space. The protein resides in the extracellular matrix. DSP may be an important factor in dentinogenesis. DPP may bind high amount of calcium and facilitate initial mineralization of dentin matrix collagen as well as regulate the size and shape of the crystals. This is Dentin sialophosphoprotein (Dspp) from Rattus norvegicus (Rat).